Here is a 1002-residue protein sequence, read N- to C-terminus: SIT4-associating protein SAP155 (1002 aa).

5 disordered regions span residues 51–131 (GTSD…APMM), 214–273 (QQQL…ANED), 609–645 (EQLK…ESDY), 868–901 (DNTT…GGGQ), and 940–1002 (NTEN…YDHE). At S58 the chain carries Phosphoserine. Basic and acidic residues predominate over residues 62 to 97 (EYSHGDEVKTARGDQKSRFEKDDQQERYEKEEEERS). Over residues 98–114 (MNSSESSTTSFSSGSTS) the composition is skewed to low complexity. The span at 220 to 241 (SSQEDVYVESDTEQEEEKEDDN) shows a compositional bias: acidic residues. Phosphoserine is present on S255. The segment covering 262 to 273 (NNNDDDDDANED) has biased composition (acidic residues). Residues 609-626 (EQLKTKHSPTRDTDHDLK) show a composition bias toward basic and acidic residues. Residues T613 and T618 each carry the phosphothreonine modification. Positions 635–645 (DNNDNDDESDY) are enriched in acidic residues. A compositionally biased stretch (polar residues) spans 868-885 (DNTTVLTPNGDASNNNEI). The span at 956–976 (SNSNINNTNHNSNNSNNNDNN) shows a compositional bias: low complexity. Over residues 991–1002 (EDADNDNDYDHE) the composition is skewed to acidic residues.

This sequence belongs to the SAPS family. In terms of assembly, associates with the SIT4 protein phosphatase catalytic subunit in a cell-cycle-dependent manner. In terms of processing, hyperphosphorylated in the absence of SIT4.

The protein localises to the cytoplasm. In terms of biological role, positive regulator of protein phosphatase SIT4. Involved in directing expression of TOR-repressed genes and in dephosphorylation of NPR1 in response to nutrient starvation. Negatively modulates K(+) efflux of the cell by the Na(+)-K(+)/H(+) antiporter NHA1. The protein is SIT4-associating protein SAP155 (SAP155) of Saccharomyces cerevisiae (strain ATCC 204508 / S288c) (Baker's yeast).